Here is a 323-residue protein sequence, read N- to C-terminus: Transcription factor MYB56 (323 aa).

A compositionally biased stretch (basic and acidic residues) spans 1 to 14 (MNPNLLEKDLRGKE). Residues 1-84 (MNPNLLEKDL…EKSLRMRGKS (84 aa)) are disordered. Residues 27 to 60 (NFRSLPNSHTAACKTSLNNPSISRNHPHNKSASV) are compositionally biased toward polar residues. The span at 66–78 (EHGNERGENEKSL) shows a compositional bias: basic and acidic residues. HTH myb-type domains follow at residues 88 to 139 (TKVC…FNQL) and 140 to 194 (DPRI…ARRT). 2 consecutive DNA-binding regions (H-T-H motif) follow at residues 116–138 (WNLI…WFNQ) and 167–190 (WALI…HVIM). The interval 192 to 217 (RRTRESQRQRQQPPPTLSRDAEMTVS) is disordered.

As to quaternary structure, forms homodimer. Interacts with the dephosphorylated active form of BES1 in the nucleus of quiescent center (QC) cells. Interacts with BPM1, BPM2, BPM3, BPM4, BPM5 and BPM6 at the promoter of FLOWERING LOCUS T (FT). In terms of tissue distribution, mostly expressed in flowers (at protein level) and siliques, and, to a lower extent, in roots, stems and leaves. Expressed in embryos (e.g. heart and torpedo stages) and cotyledons, and, at low levels, in roots and inflorescence. Accumulates specifically in root apical meristem quiescent center (QC) and vascular initial cells.

The protein localises to the nucleus. The protein resides in the cytoplasm. It localises to the cytosol. Functionally, acts as a cell-specific local repressor of quiescent center (QC) self-renewal by cell divisions in the primary root. Counteracts brassinosteroid (BR)-mediated cell division in the QC cells. Regulates maternally seed size, especially before the heart stage, promoting both endothelial cells expansion and cell number in the outer integument layer of the seed coat. Modulates the expression of genes involved in cell wall metabolism such as cell division and expansion. Negative regulator of flowering via the repression of FT transcription. In Arabidopsis thaliana (Mouse-ear cress), this protein is Transcription factor MYB56.